Consider the following 198-residue polypeptide: Adenine phosphoribosyltransferase (198 aa).

Belongs to the purine/pyrimidine phosphoribosyltransferase family. Homodimer.

Its subcellular location is the cytoplasm. It catalyses the reaction AMP + diphosphate = 5-phospho-alpha-D-ribose 1-diphosphate + adenine. The protein operates within purine metabolism; AMP biosynthesis via salvage pathway; AMP from adenine: step 1/1. Catalyzes a salvage reaction resulting in the formation of AMP, that is energically less costly than de novo synthesis. This Serratia proteamaculans (strain 568) protein is Adenine phosphoribosyltransferase.